A 430-amino-acid polypeptide reads, in one-letter code: Tol-Pal system protein TolB (430 aa).

An N-terminal signal peptide occupies residues 1 to 21 (MKQAFRVALGFFLLWASVLHA).

Belongs to the TolB family. The Tol-Pal system is composed of five core proteins: the inner membrane proteins TolA, TolQ and TolR, the periplasmic protein TolB and the outer membrane protein Pal. They form a network linking the inner and outer membranes and the peptidoglycan layer.

It is found in the periplasm. In terms of biological role, part of the Tol-Pal system, which plays a role in outer membrane invagination during cell division and is important for maintaining outer membrane integrity. TolB occupies a key intermediary position in the Tol-Pal system because it communicates directly with both membrane-embedded components, Pal in the outer membrane and TolA in the inner membrane. This is Tol-Pal system protein TolB from Sodalis glossinidius (strain morsitans).